The chain runs to 753 residues: 5-methyltetrahydropteroyltriglutamate--homocysteine methyltransferase (753 aa).

5-methyltetrahydropteroyltri-L-glutamate contacts are provided by residues 17-20 and Lys-117; that span reads RELK. L-homocysteine is bound by residues 431-433 and Glu-484; that span reads IGS. Residues 431-433 and Glu-484 contribute to the L-methionine site; that span reads IGS. Residues 515–516 and Trp-561 each bind 5-methyltetrahydropteroyltri-L-glutamate; that span reads RC. Asp-599 serves as a coordination point for L-homocysteine. Asp-599 contacts L-methionine. Glu-605 lines the 5-methyltetrahydropteroyltri-L-glutamate pocket. Residues His-641, Cys-643, and Glu-665 each contribute to the Zn(2+) site. The active-site Proton donor is His-694. Cys-726 contributes to the Zn(2+) binding site.

It belongs to the vitamin-B12 independent methionine synthase family. Requires Zn(2+) as cofactor.

It carries out the reaction 5-methyltetrahydropteroyltri-L-glutamate + L-homocysteine = tetrahydropteroyltri-L-glutamate + L-methionine. It participates in amino-acid biosynthesis; L-methionine biosynthesis via de novo pathway; L-methionine from L-homocysteine (MetE route): step 1/1. Its function is as follows. Catalyzes the transfer of a methyl group from 5-methyltetrahydrofolate to homocysteine resulting in methionine formation. In Escherichia coli (strain SMS-3-5 / SECEC), this protein is 5-methyltetrahydropteroyltriglutamate--homocysteine methyltransferase.